A 564-amino-acid chain; its full sequence is MAAAVRPGAEPWNRVRIPQAGNCSTLTVRDPSATLDICTAAVTKGCHLVTQSLKSQTLDAEVDVLCSVLYSNHNRLGHHKPHLALRQVEQCLKRLKHMNLEGSIEDLSQLLSANATQPGATENRVVPSQPVVEVVLMKVLGGCKLLLRLLDCCCKAFLLTVKHLGLKEFIILNLVMVGLVSRLWVLHKGLLRRLISLYEPLLSLRQEISSIHPMPYFKDFAFPSDITDFLGPSYLEVFKVKTPAASATKGVTKLLNKLFLMREQLPKMNEDTLDRLSKPSEQMTSNPQSTVDLGQPVKACKRTRKEKPLGFDLRAFCTRLGNKATQETNRDFKYSQSKLKTTKLPSQQLRTHWANDTVQRIRKTKTFAQLSEEIEMAIVWSRSKKLKTQATFLGNKLLKSNRFRHVESQGYSLTKKLQCMKTSLCNCLLRGSRTSTSEHPPRQRRSKYKVLSRQRKPQRKLQSTLLKETQQVPEGTLKNTRDSSAKRRCSGTVQRSDVCPNGKQVLRKLAKPDLKTKVVVHGNLTGGSRNESGFQAKTQMHTHNAPDTAKEADDIDDIFALMGV.

Positions 431–495 (GSRTSTSEHP…KRRCSGTVQR (65 aa)) are disordered. The segment covering 442–459 (RQRRSKYKVLSRQRKPQR) has biased composition (basic residues). The nuclear localization signal stretch occupies residues 442 to 460 (RQRRSKYKVLSRQRKPQRK). Over residues 460–473 (KLQSTLLKETQQVP) the composition is skewed to polar residues.

The protein belongs to the nepro family.

Its subcellular location is the nucleus. The protein resides in the nucleolus. May play a role in cortex development as part of the Notch signaling pathway. Downstream of Notch may repress the expression of proneural genes and inhibit neuronal differentiation thereby maintaining neural progenitors. May also play a role in preimplentation embryo development. This chain is Nucleolus and neural progenitor protein, found in Mus musculus (Mouse).